Here is a 234-residue protein sequence, read N- to C-terminus: Leucyl/phenylalanyl-tRNA--protein transferase (234 aa).

This sequence belongs to the L/F-transferase family.

It localises to the cytoplasm. The catalysed reaction is N-terminal L-lysyl-[protein] + L-leucyl-tRNA(Leu) = N-terminal L-leucyl-L-lysyl-[protein] + tRNA(Leu) + H(+). It carries out the reaction N-terminal L-arginyl-[protein] + L-leucyl-tRNA(Leu) = N-terminal L-leucyl-L-arginyl-[protein] + tRNA(Leu) + H(+). It catalyses the reaction L-phenylalanyl-tRNA(Phe) + an N-terminal L-alpha-aminoacyl-[protein] = an N-terminal L-phenylalanyl-L-alpha-aminoacyl-[protein] + tRNA(Phe). Functionally, functions in the N-end rule pathway of protein degradation where it conjugates Leu, Phe and, less efficiently, Met from aminoacyl-tRNAs to the N-termini of proteins containing an N-terminal arginine or lysine. In Dechloromonas aromatica (strain RCB), this protein is Leucyl/phenylalanyl-tRNA--protein transferase.